The chain runs to 204 residues: ATP phosphoribosyltransferase (204 aa).

This sequence belongs to the ATP phosphoribosyltransferase family. Short subfamily. As to quaternary structure, heteromultimer composed of HisG and HisZ subunits.

The protein localises to the cytoplasm. It catalyses the reaction 1-(5-phospho-beta-D-ribosyl)-ATP + diphosphate = 5-phospho-alpha-D-ribose 1-diphosphate + ATP. The protein operates within amino-acid biosynthesis; L-histidine biosynthesis; L-histidine from 5-phospho-alpha-D-ribose 1-diphosphate: step 1/9. Catalyzes the condensation of ATP and 5-phosphoribose 1-diphosphate to form N'-(5'-phosphoribosyl)-ATP (PR-ATP). Has a crucial role in the pathway because the rate of histidine biosynthesis seems to be controlled primarily by regulation of HisG enzymatic activity. This chain is ATP phosphoribosyltransferase, found in Campylobacter concisus (strain 13826).